The primary structure comprises 209 residues: TVP38/TMEM64 family membrane protein slr0305 (209 aa).

The next 5 membrane-spanning stretches (helical) occupy residues 15-35 (LGTW…VVFL), 39-59 (ILTL…YVFI), 110-130 (LSPV…NVSL), 134-154 (VIGS…GSLA), and 171-191 (LQWT…IYVT).

It belongs to the TVP38/TMEM64 family.

It localises to the cell membrane. The sequence is that of TVP38/TMEM64 family membrane protein slr0305 from Synechocystis sp. (strain ATCC 27184 / PCC 6803 / Kazusa).